The sequence spans 369 residues: Histidinol-phosphate aminotransferase (369 aa).

At Lys-223 the chain carries N6-(pyridoxal phosphate)lysine.

Belongs to the class-II pyridoxal-phosphate-dependent aminotransferase family. Histidinol-phosphate aminotransferase subfamily. In terms of assembly, homodimer. Requires pyridoxal 5'-phosphate as cofactor.

The enzyme catalyses L-histidinol phosphate + 2-oxoglutarate = 3-(imidazol-4-yl)-2-oxopropyl phosphate + L-glutamate. It participates in amino-acid biosynthesis; L-histidine biosynthesis; L-histidine from 5-phospho-alpha-D-ribose 1-diphosphate: step 7/9. Functionally, catalyzes the conversion of imidazole acetol phosphate to histidinol phosphate. Can also transaminate aromatic amino acids and histidine in addition to histidinol phosphate. In Zymomonas mobilis subsp. mobilis (strain ATCC 31821 / ZM4 / CP4), this protein is Histidinol-phosphate aminotransferase.